A 123-amino-acid polypeptide reads, in one-letter code: UPF0102 protein PputW619_0932 (123 aa).

The protein belongs to the UPF0102 family.

This is UPF0102 protein PputW619_0932 from Pseudomonas putida (strain W619).